A 126-amino-acid chain; its full sequence is UPF0047 protein AF_2050 (126 aa).

The protein belongs to the UPF0047 family.

This chain is UPF0047 protein AF_2050, found in Archaeoglobus fulgidus (strain ATCC 49558 / DSM 4304 / JCM 9628 / NBRC 100126 / VC-16).